The primary structure comprises 66 residues: Large ribosomal subunit protein bL31 (66 aa).

Zn(2+) contacts are provided by cysteine 16, cysteine 18, cysteine 36, and cysteine 39.

Belongs to the bacterial ribosomal protein bL31 family. Type A subfamily. As to quaternary structure, part of the 50S ribosomal subunit. It depends on Zn(2+) as a cofactor.

Its function is as follows. Binds the 23S rRNA. The protein is Large ribosomal subunit protein bL31 of Geobacillus kaustophilus (strain HTA426).